The primary structure comprises 332 residues: Abscisic acid-inducible protein kinase (332 aa).

ATP-binding positions include 1–8 (GSGNFGVA) and lysine 23. In terms of domain architecture, Protein kinase spans 1–250 (GSGNFGVAKL…IPEIKNHPWF (250 aa)). Catalysis depends on aspartate 113, which acts as the Proton acceptor.

This sequence belongs to the protein kinase superfamily. Ser/Thr protein kinase family. Autophosphorylated.

The enzyme catalyses L-seryl-[protein] + ATP = O-phospho-L-seryl-[protein] + ADP + H(+). The catalysed reaction is L-threonyl-[protein] + ATP = O-phospho-L-threonyl-[protein] + ADP + H(+). Involved in water-stress responses. The protein is Abscisic acid-inducible protein kinase of Triticum aestivum (Wheat).